Reading from the N-terminus, the 79-residue chain is Conotoxin LiCr173 (79 aa).

Residues 1 to 20 (MSGLGTMVLTLLLLVFMVTS) form the signal peptide. Positions 21 to 46 (HQDGGKKQATQRNAVNIRRRKSITQR) are excised as a propeptide. 3 disulfides stabilise this stretch: C52-C64, C56-C73, and C63-C77. At F78 the chain carries Phenylalanine amide.

The protein belongs to the conotoxin O3 superfamily. As to expression, expressed by the venom duct.

The protein resides in the secreted. This Conus lividus (Livid cone) protein is Conotoxin LiCr173.